Here is a 257-residue protein sequence, read N- to C-terminus: MPELLNPAPVAHLRHLLRAHSPLVHCMTNDVVQTFTANVLLAVGASPAMVIDPREAAQFAAIADALLINVGTLTEDRAVAMRAAVEHARQAGKPWTLDPVAVGALTVRTAFCHELLALQPAAIRGNASEILALAGMSAGGRGVDTTDTAAAALPAAQALARRLATVVAVTGEVDYVTDGERVLSVAGGNPLMTRVVGTGCALSAVVAASAALPGDRLENVAAACGLMKQAGAIAARQGGPGSFIPAFLDALYQEVQG.

M49 lines the substrate pocket. R124 and T170 together coordinate ATP. Substrate is bound at residue G197.

It belongs to the Thz kinase family. The cofactor is Mg(2+).

It carries out the reaction 5-(2-hydroxyethyl)-4-methylthiazole + ATP = 4-methyl-5-(2-phosphooxyethyl)-thiazole + ADP + H(+). Its pathway is cofactor biosynthesis; thiamine diphosphate biosynthesis; 4-methyl-5-(2-phosphoethyl)-thiazole from 5-(2-hydroxyethyl)-4-methylthiazole: step 1/1. Functionally, catalyzes the phosphorylation of the hydroxyl group of 4-methyl-5-beta-hydroxyethylthiazole (THZ). This chain is Hydroxyethylthiazole kinase, found in Klebsiella pneumoniae subsp. pneumoniae (strain ATCC 700721 / MGH 78578).